A 453-amino-acid polypeptide reads, in one-letter code: tRNA modification GTPase MnmE (453 aa).

Arg-22, Glu-79, and Lys-119 together coordinate (6S)-5-formyl-5,6,7,8-tetrahydrofolate. The TrmE-type G domain maps to 215-376; that stretch reads GMKVVIAGRP…LRNHLKECMG (162 aa). Asn-225 provides a ligand contact to K(+). GTP contacts are provided by residues 225-230, 244-250, 269-272, and 334-337; these read NAGKSS, TDIAGTT, DTAG, and NKAD. Ser-229 is a binding site for Mg(2+). K(+) is bound by residues Thr-244, Ile-246, and Thr-249. Position 250 (Thr-250) interacts with Mg(2+). Residue Lys-453 participates in (6S)-5-formyl-5,6,7,8-tetrahydrofolate binding.

It belongs to the TRAFAC class TrmE-Era-EngA-EngB-Septin-like GTPase superfamily. TrmE GTPase family. As to quaternary structure, homodimer. Heterotetramer of two MnmE and two MnmG subunits. It depends on K(+) as a cofactor.

Its subcellular location is the cytoplasm. Exhibits a very high intrinsic GTPase hydrolysis rate. Involved in the addition of a carboxymethylaminomethyl (cmnm) group at the wobble position (U34) of certain tRNAs, forming tRNA-cmnm(5)s(2)U34. The chain is tRNA modification GTPase MnmE from Vibrio vulnificus (strain CMCP6).